We begin with the raw amino-acid sequence, 101 residues long: Apolipoprotein C-II (101 aa).

Residues 1 to 22 form the signal peptide; it reads MGIRYLLVLVLVLLVLGCEVQG. Residues 23–28 constitute a propeptide that is removed on maturation; the sequence is AHMPQQ. A lipid binding region spans residues 66 to 74; sequence TMDEKIREI. The interval 78–101 is lipoprotein lipase cofactor; that stretch reads STAAVSTYAGIFTDQLLSMLKGDQ.

Belongs to the apolipoprotein C2 family. Post-translationally, proapolipoprotein C-II is synthesized as a sialic acid containing glycoprotein which is subsequently desialylated prior to its proteolytic processing. Proapolipoprotein C-II, the major form found in plasma undergoes proteolytic cleavage of its N-terminal hexapeptide to generate apolipoprotein C-II, which occurs as the minor form in plasma.

It localises to the secreted. In terms of biological role, component of chylomicrons, very low-density lipoproteins (VLDL), low-density lipoproteins (LDL), and high-density lipoproteins (HDL) in plasma. Plays an important role in lipoprotein metabolism as an activator of lipoprotein lipase. Both proapolipoprotein C-II and apolipoprotein C-II can activate lipoprotein lipase. The chain is Apolipoprotein C-II (APOC2) from Neomonachus schauinslandi (Hawaiian monk seal).